The primary structure comprises 778 residues: IQ domain-containing protein E (778 aa).

Disordered regions lie at residues 1-71 (MSLG…LSSR) and 83-108 (SSKQGSVAQPPSPTLTSEHAWTHPPS). The segment covering 37-49 (KPPSTSPKSPYYS) has biased composition (low complexity). Residues 83-101 (SSKQGSVAQPPSPTLTSEH) show a composition bias toward polar residues. Residues 157 to 323 (LHMQKSDVDL…DLDRMLSNSP (167 aa)) are a coiled coil. Residue S322 is modified to Phosphoserine. Disordered regions lie at residues 348-392 (KKVS…EDLP), 443-462 (ETAREGEKGRQEQEQALREE), 474-529 (EEAK…SEER), and 573-612 (LVRSKVPDSRSPSLPGLLSPLNQSSPAPRVLSPISPAEEN). Residues 352-362 (SSESPKQSTSE) show a composition bias toward low complexity. A coiled-coil region spans residues 398-486 (EEQEHLQGTV…KREEKNSFVA (89 aa)). 2 consecutive IQ domains span residues 553-582 (LDEAATVLQAAFRGHLARSKLVRSKVPDSR) and 615-644 (QEEAVIVIQSILRGYLAQARFIASCCREIA). The span at 581-598 (SRSPSLPGLLSPLNQSSP) shows a compositional bias: low complexity. Polar residues predominate over residues 651-662 (TVSLTPSGSASP). The segment at 651–778 (TVSLTPSGSA…LPRKKSPSPF (128 aa)) is disordered. S661 carries the phosphoserine modification. A compositionally biased stretch (basic and acidic residues) spans 672-686 (IRKELCASEELRETS). The span at 739 to 752 (PSPPELQPLSPPPV) shows a compositional bias: pro residues.

As to quaternary structure, component of the EvC complex composed of EFCAB7, IQCE, EVC2 and EVC; built from two subcomplexes, EVC2:EVC and EFCAB7:IQCE. Interacts (via N-terminus) with EFCAB7 (via EF-hands 1 and 2); this interaction anchors the EVC-EVC2 complex in a signaling microdomain at the base of cilia and stimulates the Hedgehog (Hh) pathway. Interacts with EVC2 (via N-terminal end). Interacts with EVC.

It is found in the cell projection. The protein resides in the cilium membrane. Its function is as follows. Component of the EvC complex that positively regulates ciliary Hedgehog (Hh) signaling. Required for proper limb morphogenesis. The protein is IQ domain-containing protein E (Iqce) of Mus musculus (Mouse).